The chain runs to 180 residues: uncharacterized protein (180 aa).

The signal sequence occupies residues 1 to 30 (MRHKIITFILAVVVIIIIGNMIGGGGGSEA). The interval 25-46 (GGGSEATSKTSSSSKAETEKTY) is disordered. The segment covering 29–39 (EATSKTSSSSK) has biased composition (low complexity).

Its subcellular location is the secreted. This is an uncharacterized protein from Bacillus subtilis (strain 168).